Consider the following 59-residue polypeptide: Large ribosomal subunit protein bL32 (59 aa).

The tract at residues 1 to 59 (MAVQQNKKSPSKRGMHRAHDFLTAPVIAIEPSTGEAHRRHHISPNGFYRGRKVVKGKDE) is disordered. Basic residues predominate over residues 49–59 (RGRKVVKGKDE).

The protein belongs to the bacterial ribosomal protein bL32 family.

This chain is Large ribosomal subunit protein bL32, found in Laribacter hongkongensis (strain HLHK9).